We begin with the raw amino-acid sequence, 207 residues long: Large ribosomal subunit protein uL4 (207 aa).

The disordered stretch occupies residues 53 to 76 (NRSAVRGGGRKPWRQKGTGRARQG). Positions 60-71 (GGRKPWRQKGTG) are enriched in basic residues.

Belongs to the universal ribosomal protein uL4 family. In terms of assembly, part of the 50S ribosomal subunit.

One of the primary rRNA binding proteins, this protein initially binds near the 5'-end of the 23S rRNA. It is important during the early stages of 50S assembly. It makes multiple contacts with different domains of the 23S rRNA in the assembled 50S subunit and ribosome. Its function is as follows. Forms part of the polypeptide exit tunnel. This Staphylococcus saprophyticus subsp. saprophyticus (strain ATCC 15305 / DSM 20229 / NCIMB 8711 / NCTC 7292 / S-41) protein is Large ribosomal subunit protein uL4.